The following is a 446-amino-acid chain: D(1A) dopamine receptor (446 aa).

The Extracellular portion of the chain corresponds to 1–23 (MRTLNTSAMDGTGLVVERDFSVR). Asn-5 carries N-linked (GlcNAc...) asparagine glycosylation. The chain crosses the membrane as a helical span at residues 24-49 (ILTACFLSLLILSTLLGNTLVCAAVI). Topologically, residues 50-60 (RFRHLRSKVTN) are cytoplasmic. A helical membrane pass occupies residues 61-87 (FFVISLAVSDLLVAVLVMPWKAVAEIA). Residues 88–96 (GFWPFGSFC) lie on the Extracellular side of the membrane. Cys-96 and Cys-186 are disulfide-bonded. A helical membrane pass occupies residues 97 to 119 (NIWVAFDIMCSTASILNLCVISV). Residues 120 to 138 (DRYWAISSPFRYERKMTPK) are Cytoplasmic-facing. The helical transmembrane segment at 139–163 (AAFILISVAWTLSVLISFIPVQLSW) threads the bilayer. Over 164-192 (HKAKPTSPSDGNATSLAETIDNCDSSLSR) the chain is Extracellular. A glycan (N-linked (GlcNAc...) asparagine) is linked at Asn-175. The chain crosses the membrane as a helical span at residues 193 to 218 (TYAISSSVISFYIPVAIMIVTYTRIY). Topologically, residues 219-272 (RIAQKQIRRIAALERAAVHAKNCQTTTGNGKPVECSQPESSFKMSFKRETKVLK) are cytoplasmic. The helical transmembrane segment at 273–299 (TLSVIMGVFVCCWLPFFILNCILPFCG) threads the bilayer. At 300–312 (SGETQPFCIDSIT) the chain is on the extracellular side. A helical membrane pass occupies residues 313–337 (FDVFVWFGWANSSLNPIIYAFNADF). Residues 338–446 (RKAFSTLLGC…PITQNGQHPT (109 aa)) are Cytoplasmic-facing. Residues Cys-347 and Cys-351 are each lipidated (S-palmitoyl cysteine).

It belongs to the G-protein coupled receptor 1 family. As to quaternary structure, interacts with DNAJC14 via its C-terminus. Interacts with DRD2. Interacts with DORIP1.

The protein localises to the cell membrane. The protein resides in the endoplasmic reticulum membrane. Its subcellular location is the cell projection. It localises to the cilium membrane. It is found in the dendrite. The protein localises to the dendritic spine. Dopamine receptor whose activity is mediated by G proteins which activate adenylyl cyclase. The chain is D(1A) dopamine receptor (DRD1) from Macaca mulatta (Rhesus macaque).